A 263-amino-acid polypeptide reads, in one-letter code: Probable endonuclease lcl3 (263 aa).

A disordered region spans residues Met-1–Ser-21. Residues Ser-8–Arg-19 are compositionally biased toward basic and acidic residues. The chain crosses the membrane as a helical span at residues Thr-41 to Tyr-59. The region spanning Arg-80–Gly-240 is the TNase-like domain. Arg-131 is an active-site residue. Asp-136 contributes to the Ca(2+) binding site. Residues Glu-139 and Arg-179 contribute to the active site. The disordered stretch occupies residues Gly-236–Lys-263. Basic and acidic residues predominate over residues Lys-241–Thr-253.

This sequence belongs to the LCL3 family.

It is found in the mitochondrion. It localises to the membrane. In Botryotinia fuckeliana (strain B05.10) (Noble rot fungus), this protein is Probable endonuclease lcl3 (lcl3).